We begin with the raw amino-acid sequence, 213 residues long: Orotate phosphoribosyltransferase (213 aa).

Lys25 provides a ligand contact to 5-phospho-alpha-D-ribose 1-diphosphate. 33-34 (FF) is a binding site for orotate. Residues 71 to 72 (YK), Arg98, Lys99, Lys102, His104, and 124 to 132 (DDVITSGTA) each bind 5-phospho-alpha-D-ribose 1-diphosphate. The orotate site is built by Thr128 and Arg156.

The protein belongs to the purine/pyrimidine phosphoribosyltransferase family. PyrE subfamily. As to quaternary structure, homodimer. Requires Mg(2+) as cofactor.

The catalysed reaction is orotidine 5'-phosphate + diphosphate = orotate + 5-phospho-alpha-D-ribose 1-diphosphate. It participates in pyrimidine metabolism; UMP biosynthesis via de novo pathway; UMP from orotate: step 1/2. Its function is as follows. Catalyzes the transfer of a ribosyl phosphate group from 5-phosphoribose 1-diphosphate to orotate, leading to the formation of orotidine monophosphate (OMP). This is Orotate phosphoribosyltransferase from Buchnera aphidicola subsp. Acyrthosiphon pisum (strain 5A).